Reading from the N-terminus, the 486-residue chain is Galactose-1-phosphate uridylyltransferase (486 aa).

This sequence belongs to the galactose-1-phosphate uridylyltransferase type 2 family.

It localises to the cytoplasm. The catalysed reaction is alpha-D-galactose 1-phosphate + UDP-alpha-D-glucose = alpha-D-glucose 1-phosphate + UDP-alpha-D-galactose. It participates in carbohydrate metabolism; galactose metabolism. In Lacticaseibacillus casei (strain BL23) (Lactobacillus casei), this protein is Galactose-1-phosphate uridylyltransferase.